The following is an 84-amino-acid chain: uncharacterized protein (84 aa).

Over residues 1 to 14 the composition is skewed to low complexity; it reads MQKLNKSSSKGKNN. The interval 1-84 is disordered; it reads MQKLNKSSSK…VDKGERKESE (84 aa). Over residues 28 to 40 the composition is skewed to gly residues; it reads STYGFGPYGGGGF. Composition is skewed to basic and acidic residues over residues 53-65 and 73-84; these read DTKK…EEGT and KLVDKGERKESE.

This is an uncharacterized protein from Schizosaccharomyces pombe (strain 972 / ATCC 24843) (Fission yeast).